Consider the following 201-residue polypeptide: dITP/XTP pyrophosphatase (201 aa).

8–13 is a substrate binding site; it reads TNNENK. Residues Glu41 and Asp73 each contribute to the Mg(2+) site. Asp73 (proton acceptor) is an active-site residue. Residues Ser74, 154-157, Lys177, and 182-183 contribute to the substrate site; these read FGYD and HR.

The protein belongs to the HAM1 NTPase family. In terms of assembly, homodimer. The cofactor is Mg(2+).

It catalyses the reaction XTP + H2O = XMP + diphosphate + H(+). The catalysed reaction is dITP + H2O = dIMP + diphosphate + H(+). The enzyme catalyses ITP + H2O = IMP + diphosphate + H(+). Pyrophosphatase that catalyzes the hydrolysis of nucleoside triphosphates to their monophosphate derivatives, with a high preference for the non-canonical purine nucleotides XTP (xanthosine triphosphate), dITP (deoxyinosine triphosphate) and ITP. Seems to function as a house-cleaning enzyme that removes non-canonical purine nucleotides from the nucleotide pool, thus preventing their incorporation into DNA/RNA and avoiding chromosomal lesions. The protein is dITP/XTP pyrophosphatase of Clostridium tetani (strain Massachusetts / E88).